A 1227-amino-acid chain; its full sequence is MLKGQKEGEAEPVPEGDKSGAGSSPSGVRKGLRVPLGLVSHSFSSLAKHKEAERRLTDEEESLSSPQDREDDAASPNIMAKSIAGLLTTASMYVGIGDIHRAEQLATGQPETDAGADETEDEMDEAGDETGDDADAPATGTDGEEESRPVSAQESRRSTLFELSIEPHPESHTAQASRTKNRRSRMTSKLRSKFNLDDDEELVREYPCWLLRDVLIQGHIYLTSRNLLFFAFLYKSNGSARLTGNLSICNNGLSISGISGKPTRYWTVLKDHTLSLYSSSTDLYFPVLTIDLRYVTKVQHCKNNGKDTRQFHITTESKTYTFYSDNEHSARSWSSALKKQVFATQNSDNDSMSVRIPLSNIIDVEEQAIVEQGLTLRVRVMESSDSFALDDYFFMFFNNAGSQLKELIQIQVANLEMLGAANVDYARHPLPPDTEASLPAVASDAAPQDAAIASEAAADAAAADTASHSPSTNAEPRARGRSTERAMAASAYLFGRLTSPRRDDAKQLSPSKVKLRFRSVADTLKLTTPRQPGSDAPQEPEPETTILESRPRLNYWSPRPFTTMRSMWNAQPVHYAAKGMSLFADDDELMIGDEAELLAADKRFKAHFSLTDDESLVASYYTYLNRSMPLYGKIYLGKTIMCFRSLLPGSKTKMILPLHDVENCYKEQGFRFGYFGLVVVIYGHEELFFEFASQKSRDDAEYVILKIIDSLKPVDGVMADDMSAGAYSLKAAQGRDATTDAKVKLFEQRISSVGYDIPIMVEDNPFYKTTITPKKFYTFGMLTIGSRGDVQPYIALGKGLLQEGHRVVVISHAEFGDWVRSHGLQFRAIAGDPAELMALMVQHGSMNVGLIREAASTFRNWIRDLLETAWEACQGIDVLIESPSAMAGIHIAEALQIPYFRAFTMPWTKTRSYPHAFIVPDQKRGGNYNYFTHVLFENIFWKGINSQVNRWRVEKLGLKKTNLEFMQQGKVPFLYNMSPTVFPPSVDFAEWIKVTGYWFLNESSNYVPPQALLEFMAKARRLDKKLVYIGFGSIVVKDPVKMTMAVVEAVVKADVYCILNKGWSARLGGQSQKSIEVQLPNCVYDAGNVPHDWLFPRVDAAVHHGGSGTTGATMRAGVPTVIKPFFGDQYFYANRIEDIGAGIALRKLNACTLSRALKEVTTNTRIIAKAKKIGQDISKEDGVATAIAFIYSEMAYAKSLIKAKRQEDKKAAKEAKQIQNEDSWLLL.

2 disordered regions span residues 1–76 (MLKG…AASP) and 104–189 (QLAT…MTSK). Basic and acidic residues predominate over residues 48–57 (KHKEAERRLT). The segment covering 114–135 (AGADETEDEMDEAGDETGDDAD) has biased composition (acidic residues). The segment covering 154 to 171 (ESRRSTLFELSIEPHPES) has biased composition (basic and acidic residues). A compositionally biased stretch (basic residues) spans 179–189 (TKNRRSRMTSK). The GRAM 1 domain maps to 188 to 229 (SKLRSKFNLDDDEELVREYPCWLLRDVLIQGHIYLTSRNLLF). One can recognise a PH domain in the interval 239 to 342 (SARLTGNLSI…WSSALKKQVF (104 aa)). Positions 449 to 469 (DAAIASEAAADAAAADTASHS) are enriched in low complexity. 2 disordered regions span residues 449 to 484 (DAAIASEAAADAAAADTASHSPSTNAEPRARGRSTE) and 523 to 550 (TLKLTTPRQPGSDAPQEPEPETTILESR). Residues 602 to 668 (KRFKAHFSLT…HDVENCYKEQ (67 aa)) enclose the GRAM 2 domain. UDP-alpha-D-glucose-binding residues include S786, R787, D789, N1060, N1088, V1089, H1091, H1104, S1107, G1108, T1109, D1128, and Q1129.

Belongs to the glycosyltransferase 28 family.

It is found in the cytoplasm. The protein localises to the membrane. It carries out the reaction a sterol + UDP-alpha-D-glucose = a sterol 3-beta-D-glucoside + UDP + H(+). The catalysed reaction is ergosterol + UDP-alpha-D-glucose = ergosteryl 3-beta-D-glucoside + UDP + H(+). Its function is as follows. Sterol glycosyltransferase responsible for the glycosylation of ergosterol to form ergosterol-glucoside. The chain is Sterol 3-beta-glucosyltransferase from Eremothecium gossypii (strain ATCC 10895 / CBS 109.51 / FGSC 9923 / NRRL Y-1056) (Yeast).